A 422-amino-acid polypeptide reads, in one-letter code: 3-isopropylmalate dehydratase large subunit (422 aa).

3 residues coordinate [4Fe-4S] cluster: Cys-303, Cys-363, and Cys-366.

It belongs to the aconitase/IPM isomerase family. LeuC type 2 subfamily. Heterodimer of LeuC and LeuD. [4Fe-4S] cluster is required as a cofactor.

The enzyme catalyses (2R,3S)-3-isopropylmalate = (2S)-2-isopropylmalate. The protein operates within amino-acid biosynthesis; L-leucine biosynthesis; L-leucine from 3-methyl-2-oxobutanoate: step 2/4. Its function is as follows. Catalyzes the isomerization between 2-isopropylmalate and 3-isopropylmalate, via the formation of 2-isopropylmaleate. This Wolinella succinogenes (strain ATCC 29543 / DSM 1740 / CCUG 13145 / JCM 31913 / LMG 7466 / NCTC 11488 / FDC 602W) (Vibrio succinogenes) protein is 3-isopropylmalate dehydratase large subunit.